We begin with the raw amino-acid sequence, 190 residues long: Peptidyl-tRNA hydrolase (190 aa).

Y18 lines the tRNA pocket. H23 serves as the catalytic Proton acceptor. TRNA-binding residues include F69, N71, and N117.

The protein belongs to the PTH family. Monomer.

Its subcellular location is the cytoplasm. The catalysed reaction is an N-acyl-L-alpha-aminoacyl-tRNA + H2O = an N-acyl-L-amino acid + a tRNA + H(+). Its function is as follows. Hydrolyzes ribosome-free peptidyl-tRNAs (with 1 or more amino acids incorporated), which drop off the ribosome during protein synthesis, or as a result of ribosome stalling. Functionally, catalyzes the release of premature peptidyl moieties from peptidyl-tRNA molecules trapped in stalled 50S ribosomal subunits, and thus maintains levels of free tRNAs and 50S ribosomes. This is Peptidyl-tRNA hydrolase from Rhodococcus opacus (strain B4).